The chain runs to 220 residues: Large ribosomal subunit protein uL3 (220 aa).

The interval 132–153 (SGRASHGNSRSHNVPGSIGMAQ) is disordered. Positions 133-145 (GRASHGNSRSHNV) are enriched in polar residues. Q153 is modified (N5-methylglutamine).

Belongs to the universal ribosomal protein uL3 family. In terms of assembly, part of the 50S ribosomal subunit. Forms a cluster with proteins L14 and L19. Post-translationally, methylated by PrmB.

One of the primary rRNA binding proteins, it binds directly near the 3'-end of the 23S rRNA, where it nucleates assembly of the 50S subunit. The sequence is that of Large ribosomal subunit protein uL3 from Ralstonia nicotianae (strain ATCC BAA-1114 / GMI1000) (Ralstonia solanacearum).